The following is a 205-amino-acid chain: Large ribosomal subunit protein uL18 (205 aa).

Belongs to the universal ribosomal protein uL18 family. As to quaternary structure, part of the 50S ribosomal subunit. Contacts the 5S and 23S rRNAs.

This is one of the proteins that bind and probably mediate the attachment of the 5S RNA into the large ribosomal subunit, where it forms part of the central protuberance. This chain is Large ribosomal subunit protein uL18, found in Pyrobaculum aerophilum (strain ATCC 51768 / DSM 7523 / JCM 9630 / CIP 104966 / NBRC 100827 / IM2).